Here is a 43-residue protein sequence, read N- to C-terminus: Protein PsbN (43 aa).

Residues 5–27 traverse the membrane as a helical segment; that stretch reads TFLSIFISAALLGITGYSIYTAF.

The protein belongs to the PsbN family.

The protein resides in the plastid. Its subcellular location is the cyanelle thylakoid membrane. May play a role in photosystem I and II biogenesis. This chain is Protein PsbN, found in Cyanophora paradoxa.